The primary structure comprises 194 residues: NADH-quinone oxidoreductase subunit B 1 (194 aa).

The [4Fe-4S] cluster site is built by Cys47, Cys48, Cys113, and Cys142.

This sequence belongs to the complex I 20 kDa subunit family. In terms of assembly, NDH-1 is composed of 14 different subunits. Subunits NuoB, C, D, E, F, and G constitute the peripheral sector of the complex. Requires [4Fe-4S] cluster as cofactor.

It is found in the cell inner membrane. The catalysed reaction is a quinone + NADH + 5 H(+)(in) = a quinol + NAD(+) + 4 H(+)(out). Its function is as follows. NDH-1 shuttles electrons from NADH, via FMN and iron-sulfur (Fe-S) centers, to quinones in the respiratory chain. The immediate electron acceptor for the enzyme in this species is believed to be ubiquinone. Couples the redox reaction to proton translocation (for every two electrons transferred, four hydrogen ions are translocated across the cytoplasmic membrane), and thus conserves the redox energy in a proton gradient. This is NADH-quinone oxidoreductase subunit B 1 from Sorangium cellulosum (strain So ce56) (Polyangium cellulosum (strain So ce56)).